The primary structure comprises 305 residues: Homoserine O-acetyltransferase (305 aa).

C132 acts as the Acyl-thioester intermediate in catalysis. Substrate-binding residues include K153 and S181. Catalysis depends on H221, which acts as the Proton acceptor. The active site involves E223. Residue R235 coordinates substrate.

It belongs to the MetA family.

The protein localises to the cytoplasm. The catalysed reaction is L-homoserine + acetyl-CoA = O-acetyl-L-homoserine + CoA. Its pathway is amino-acid biosynthesis; L-methionine biosynthesis via de novo pathway; O-acetyl-L-homoserine from L-homoserine: step 1/1. Its function is as follows. Transfers an acetyl group from acetyl-CoA to L-homoserine, forming acetyl-L-homoserine. The sequence is that of Homoserine O-acetyltransferase from Leuconostoc mesenteroides subsp. mesenteroides (strain ATCC 8293 / DSM 20343 / BCRC 11652 / CCM 1803 / JCM 6124 / NCDO 523 / NBRC 100496 / NCIMB 8023 / NCTC 12954 / NRRL B-1118 / 37Y).